A 414-amino-acid chain; its full sequence is Serine--tRNA ligase (414 aa).

230 to 232 contacts L-serine; that stretch reads TAE. An ATP-binding site is contributed by 261-263; it reads RKE. Glu284 serves as a coordination point for L-serine. ATP is bound at residue 348-351; it reads EISS. L-serine is bound at residue Ser382.

The protein belongs to the class-II aminoacyl-tRNA synthetase family. Type-1 seryl-tRNA synthetase subfamily. As to quaternary structure, homodimer. The tRNA molecule binds across the dimer.

The protein localises to the cytoplasm. It catalyses the reaction tRNA(Ser) + L-serine + ATP = L-seryl-tRNA(Ser) + AMP + diphosphate + H(+). The enzyme catalyses tRNA(Sec) + L-serine + ATP = L-seryl-tRNA(Sec) + AMP + diphosphate + H(+). It participates in aminoacyl-tRNA biosynthesis; selenocysteinyl-tRNA(Sec) biosynthesis; L-seryl-tRNA(Sec) from L-serine and tRNA(Sec): step 1/1. Catalyzes the attachment of serine to tRNA(Ser). Is also able to aminoacylate tRNA(Sec) with serine, to form the misacylated tRNA L-seryl-tRNA(Sec), which will be further converted into selenocysteinyl-tRNA(Sec). This Nitratiruptor sp. (strain SB155-2) protein is Serine--tRNA ligase.